The primary structure comprises 138 residues: Small ribosomal subunit protein uS11 (138 aa).

It belongs to the universal ribosomal protein uS11 family. Part of the 30S ribosomal subunit.

Located on the platform of the 30S subunit. This Pyrobaculum arsenaticum (strain DSM 13514 / JCM 11321 / PZ6) protein is Small ribosomal subunit protein uS11.